The primary structure comprises 166 residues: Interferon gamma (166 aa).

The N-terminal stretch at 1–23 (MNYTSFILAFQLCAILGSSTYYC) is a signal peptide. A Pyrrolidone carboxylic acid modification is found at glutamine 24. N-linked (GlcNAc...) asparagine glycans are attached at residues asparagine 39 and asparagine 106. Residues 147–166 (ANLRKRKRSQNPFRGRRALQ) are disordered. Positions 148–166 (NLRKRKRSQNPFRGRRALQ) are enriched in basic residues.

It belongs to the type II (or gamma) interferon family. In terms of assembly, homodimer. Interacts with IFNGR1 (via extracellular domain); this interaction promotes IFNGR1 dimerization. As to expression, released primarily from activated T lymphocytes.

The protein resides in the secreted. In terms of biological role, type II interferon produced by immune cells such as T-cells and NK cells that plays crucial roles in antimicrobial, antiviral, and antitumor responses by activating effector immune cells and enhancing antigen presentation. Primarily signals through the JAK-STAT pathway after interaction with its receptor IFNGR1 to affect gene regulation. Upon IFNG binding, IFNGR1 intracellular domain opens out to allow association of downstream signaling components JAK2, JAK1 and STAT1, leading to STAT1 activation, nuclear translocation and transcription of IFNG-regulated genes. Many of the induced genes are transcription factors such as IRF1 that are able to further drive regulation of a next wave of transcription. Plays a role in class I antigen presentation pathway by inducing a replacement of catalytic proteasome subunits with immunoproteasome subunits. In turn, increases the quantity, quality, and repertoire of peptides for class I MHC loading. Increases the efficiency of peptide generation also by inducing the expression of activator PA28 that associates with the proteasome and alters its proteolytic cleavage preference. Up-regulates as well MHC II complexes on the cell surface by promoting expression of several key molecules such as cathepsins B/CTSB, H/CTSH, and L/CTSL. Participates in the regulation of hematopoietic stem cells during development and under homeostatic conditions by affecting their development, quiescence, and differentiation. This is Interferon gamma (IFNG) from Equus caballus (Horse).